A 427-amino-acid chain; its full sequence is Glutamate-1-semialdehyde 2,1-aminomutase (427 aa).

The residue at position 267 (lysine 267) is an N6-(pyridoxal phosphate)lysine.

It belongs to the class-III pyridoxal-phosphate-dependent aminotransferase family. HemL subfamily. Homodimer. It depends on pyridoxal 5'-phosphate as a cofactor.

The protein localises to the cytoplasm. The catalysed reaction is (S)-4-amino-5-oxopentanoate = 5-aminolevulinate. It participates in porphyrin-containing compound metabolism; protoporphyrin-IX biosynthesis; 5-aminolevulinate from L-glutamyl-tRNA(Glu): step 2/2. This is Glutamate-1-semialdehyde 2,1-aminomutase from Thermodesulfovibrio yellowstonii (strain ATCC 51303 / DSM 11347 / YP87).